The primary structure comprises 131 residues: C-type natriuretic peptide 1 (131 aa).

Positions 1-22 are cleaved as a signal peptide; the sequence is MLYPALLCAALLLIAPLGHTEG. Positions 23-109 are excised as a propeptide; it reads RTLHPSPDAI…KRAVMDRSRR (87 aa). An intrachain disulfide couples C115 to C131.

It belongs to the natriuretic peptide family. As to expression, expressed in brain and to a low extent in atrium.

It is found in the secreted. In terms of biological role, exhibits natriuretic and vasodepressant activity. Has a cGMP-stimulating activity. The polypeptide is C-type natriuretic peptide 1 (Oncorhynchus mykiss (Rainbow trout)).